The primary structure comprises 266 residues: Undecaprenyl-diphosphatase (266 aa).

Transmembrane regions (helical) follow at residues 1–21 (MDTF…FLPI), 39–59 (QGLS…VIYF), 87–107 (WWII…KDFI), 114–134 (AEVI…ADKM), 149–169 (ALLI…RSGA), 183–203 (AAAR…AILV), 218–238 (ALIL…HYFL), and 246–266 (MTPF…FIFF).

It belongs to the UppP family.

The protein resides in the cell inner membrane. The catalysed reaction is di-trans,octa-cis-undecaprenyl diphosphate + H2O = di-trans,octa-cis-undecaprenyl phosphate + phosphate + H(+). Functionally, catalyzes the dephosphorylation of undecaprenyl diphosphate (UPP). Confers resistance to bacitracin. In Shewanella baltica (strain OS223), this protein is Undecaprenyl-diphosphatase.